Here is a 235-residue protein sequence, read N- to C-terminus: 2-C-methyl-D-erythritol 4-phosphate cytidylyltransferase (235 aa).

It belongs to the IspD/TarI cytidylyltransferase family. IspD subfamily.

The catalysed reaction is 2-C-methyl-D-erythritol 4-phosphate + CTP + H(+) = 4-CDP-2-C-methyl-D-erythritol + diphosphate. The protein operates within isoprenoid biosynthesis; isopentenyl diphosphate biosynthesis via DXP pathway; isopentenyl diphosphate from 1-deoxy-D-xylulose 5-phosphate: step 2/6. Functionally, catalyzes the formation of 4-diphosphocytidyl-2-C-methyl-D-erythritol from CTP and 2-C-methyl-D-erythritol 4-phosphate (MEP). This chain is 2-C-methyl-D-erythritol 4-phosphate cytidylyltransferase, found in Pseudomonas putida (strain ATCC 700007 / DSM 6899 / JCM 31910 / BCRC 17059 / LMG 24140 / F1).